A 222-amino-acid chain; its full sequence is Probable RNA 2'-phosphotransferase (222 aa).

This sequence belongs to the KptA/TPT1 family.

In terms of biological role, removes the 2'-phosphate from RNA via an intermediate in which the phosphate is ADP-ribosylated by NAD followed by a presumed transesterification to release the RNA and generate ADP-ribose 1''-2''-cyclic phosphate (APPR&gt;P). May function as an ADP-ribosylase. This is Probable RNA 2'-phosphotransferase from Haloarcula marismortui (strain ATCC 43049 / DSM 3752 / JCM 8966 / VKM B-1809) (Halobacterium marismortui).